Reading from the N-terminus, the 238-residue chain is Type III secretion protein hrcQa (238 aa).

Residues 66 to 238 (DAEALLSLLG…SHEEHSHHEY (173 aa)) are hrcQa-C.

In terms of assembly, interacts with hrcQb.

The protein resides in the cell inner membrane. Component of the type III secretion system, which is required for effector protein delivery, parasitism, and pathogenicity. Probably participates in the formation of a C-ring-like assembly along with hrcQb. This is Type III secretion protein hrcQa (hrcQa) from Pseudomonas syringae pv. syringae.